The chain runs to 518 residues: Calcium/calmodulin-dependent protein kinase kinase cmkC (518 aa).

Residues 1–72 (MANEGAGSLQ…SEYTLSQDDG (72 aa)) are disordered. 2 stretches are compositionally biased toward polar residues: residues 8-17 (SLQQDASPGS) and 60-71 (NARSEYTLSQDD). The Protein kinase domain occupies 81–376 (YVIKQEIGRG…MDELREHPWV (296 aa)). Residues 87-95 (IGRGSFGAV) and lysine 109 contribute to the ATP site. The interval 119 to 149 (RAKSQLLRQSRGPKRSSRWPKLPFSSPGTGT) is disordered. Catalysis depends on aspartate 243, which acts as the Proton acceptor. Positions 404–409 (FSAITK) are autoinhibitory domain. The interval 407–431 (ITKNFGHVLAVMKAAKKFKSLQGPT) is calmodulin-binding. The disordered stretch occupies residues 453–472 (PTQMDPEESVSLPSPLPYKK).

Belongs to the protein kinase superfamily. Ser/Thr protein kinase family.

It carries out the reaction L-seryl-[protein] + ATP = O-phospho-L-seryl-[protein] + ADP + H(+). The enzyme catalyses L-threonyl-[protein] + ATP = O-phospho-L-threonyl-[protein] + ADP + H(+). Activated by Ca(2+)/calmodulin. Binding of calmodulin may relieve intrasteric autoinhibition. Functionally, calcium/calmodulin-dependent protein kinase that operates in the calcium-triggered CaMKK-CaMK1 signaling cascade. Phosphorylates and activates cmkB in vitro. Required in G1-phase of the cell cycle for proper timing of the initial nuclear division after germination as well as for subsequent nuclear division cycles. Required for the normal temporal regulation of nimX activity. This Emericella nidulans (Aspergillus nidulans) protein is Calcium/calmodulin-dependent protein kinase kinase cmkC.